The primary structure comprises 206 residues: Large ribosomal subunit protein uL4 (206 aa).

The disordered stretch occupies residues 45–75 (RQGTHSTKTRGEVRGGGRKPWRQKGTGRARQ). Residues 60-71 (GGRKPWRQKGTG) are compositionally biased toward basic residues.

It belongs to the universal ribosomal protein uL4 family. Part of the 50S ribosomal subunit.

Its function is as follows. One of the primary rRNA binding proteins, this protein initially binds near the 5'-end of the 23S rRNA. It is important during the early stages of 50S assembly. It makes multiple contacts with different domains of the 23S rRNA in the assembled 50S subunit and ribosome. In terms of biological role, forms part of the polypeptide exit tunnel. The polypeptide is Large ribosomal subunit protein uL4 (Thermoanaerobacter pseudethanolicus (strain ATCC 33223 / 39E) (Clostridium thermohydrosulfuricum)).